The chain runs to 1048 residues: Probable beta-glucosidase E (1048 aa).

Positions 1–54 are disordered; sequence MPPPPFRDAPSSAKSSQRYTPLHESIPEELNDKQYSSDADSLPLSDPSDGEDDS. Topologically, residues 1–150 are cytoplasmic; that stretch reads MPPPPFRDAP…WRTVYYSKYW (150 aa). Residues 36 to 47 are compositionally biased toward low complexity; sequence SSDADSLPLSDP. A helical; Signal-anchor for type II membrane protein membrane pass occupies residues 151–171; that stretch reads WRALIGVVVVLVLLVLVFLGL. The Extracellular segment spans residues 172–1048; it reads ARSKQVGDEL…SRDLPLHGKY (877 aa). N-linked (GlcNAc...) asparagine glycosylation is found at asparagine 216, asparagine 224, and asparagine 410. The active site involves aspartate 438. Residues asparagine 481, asparagine 520, asparagine 578, asparagine 895, and asparagine 991 are each glycosylated (N-linked (GlcNAc...) asparagine). Residues 508–527 are disordered; that stretch reads WERPPPDGEGGPNFSSWTDD.

It belongs to the glycosyl hydrolase 3 family.

It localises to the cell membrane. It catalyses the reaction Hydrolysis of terminal, non-reducing beta-D-glucosyl residues with release of beta-D-glucose.. It functions in the pathway glycan metabolism; cellulose degradation. Its function is as follows. Beta-glucosidases are one of a number of cellulolytic enzymes involved in the degradation of cellulosic biomass. Catalyzes the last step releasing glucose from the inhibitory cellobiose. This is Probable beta-glucosidase E (bglE) from Aspergillus oryzae (strain ATCC 42149 / RIB 40) (Yellow koji mold).